The sequence spans 203 residues: ATP-dependent Clp protease proteolytic subunit 1 (203 aa).

Ser102 (nucleophile) is an active-site residue. Residue His127 is part of the active site.

This sequence belongs to the peptidase S14 family. As to quaternary structure, fourteen ClpP subunits assemble into 2 heptameric rings which stack back to back to give a disk-like structure with a central cavity, resembling the structure of eukaryotic proteasomes.

The protein resides in the cytoplasm. The enzyme catalyses Hydrolysis of proteins to small peptides in the presence of ATP and magnesium. alpha-casein is the usual test substrate. In the absence of ATP, only oligopeptides shorter than five residues are hydrolyzed (such as succinyl-Leu-Tyr-|-NHMec, and Leu-Tyr-Leu-|-Tyr-Trp, in which cleavage of the -Tyr-|-Leu- and -Tyr-|-Trp bonds also occurs).. Functionally, cleaves peptides in various proteins in a process that requires ATP hydrolysis. Has a chymotrypsin-like activity. Plays a major role in the degradation of misfolded proteins. The chain is ATP-dependent Clp protease proteolytic subunit 1 from Rhizobium johnstonii (strain DSM 114642 / LMG 32736 / 3841) (Rhizobium leguminosarum bv. viciae).